We begin with the raw amino-acid sequence, 430 residues long: RNA pseudouridine synthase 2, chloroplastic (430 aa).

Residues 1–43 (MLSISQLPSFSLTTAKSLRYPSSPSSSLSIFFSFFPKVSNFVR) constitute a chloroplast transit peptide. Positions 82-155 (IRLDSWISSR…IPLDIVYEDK (74 aa)) constitute an S4 RNA-binding domain. Residues 195 to 222 (SNSEEDDDSDEETFSDDEEMTTSPSSYA) form a disordered region. Residues 196–214 (NSEEDDDSDEETFSDDEEM) are compositionally biased toward acidic residues. Asp-234 is a catalytic residue.

This sequence belongs to the pseudouridine synthase RluA family.

It is found in the plastid. The protein localises to the chloroplast. The catalysed reaction is a uridine in RNA = a pseudouridine in RNA. This chain is RNA pseudouridine synthase 2, chloroplastic, found in Arabidopsis thaliana (Mouse-ear cress).